Reading from the N-terminus, the 548-residue chain is Elongator complex protein 3 (548 aa).

One can recognise a Radical SAM core domain in the interval R83 to P373. C100, C110, and C113 together coordinate [4Fe-4S] cluster. Residues K165, E475–V478, F498–M500, and Y531 each bind acetyl-CoA. The N-acetyltransferase domain occupies T397 to Y548.

It belongs to the ELP3 family. In terms of assembly, component of the elongator complex. [4Fe-4S] cluster is required as a cofactor.

Its subcellular location is the cytoplasm. The protein resides in the nucleus. The catalysed reaction is uridine(34) in tRNA + acetyl-CoA + S-adenosyl-L-methionine + H2O = 5-(carboxymethyl)uridine(34) in tRNA + 5'-deoxyadenosine + L-methionine + CoA + 2 H(+). It functions in the pathway tRNA modification; 5-methoxycarbonylmethyl-2-thiouridine-tRNA biosynthesis. In terms of biological role, catalytic tRNA acetyltransferase subunit of the elongator complex which is required for multiple tRNA modifications, including mcm5U (5-methoxycarbonylmethyl uridine), mcm5s2U (5-methoxycarbonylmethyl-2-thiouridine), and ncm5U (5-carbamoylmethyl uridine). In the elongator complex, acts as a tRNA uridine(34) acetyltransferase by mediating formation of carboxymethyluridine in the wobble base at position 34 in tRNAs. Involved in neurogenesis. Involved in somite development. This chain is Elongator complex protein 3, found in Danio rerio (Zebrafish).